The sequence spans 419 residues: Protein farnesyltransferase subunit beta (419 aa).

PFTB repeat units follow at residues 68–109 (EDNT…ITLG), 119–160 (RNKL…SVLN), 167–208 (IKNV…ILIG), 215–256 (LPRL…ALLQ), and 329–371 (SIAL…SLCQ). (2E,6E)-farnesyl diphosphate contacts are provided by residues 193–196 (HGGY) and 235–238 (RTNK). The Zn(2+) site is built by D241 and C243. A (2E,6E)-farnesyl diphosphate-binding site is contributed by 244–247 (YSFW). H359 provides a ligand contact to Zn(2+).

It belongs to the protein prenyltransferase subunit beta family. As to quaternary structure, heterodimer of FTA and FTB. Zn(2+) serves as cofactor.

The enzyme catalyses L-cysteinyl-[protein] + (2E,6E)-farnesyl diphosphate = S-(2E,6E)-farnesyl-L-cysteinyl-[protein] + diphosphate. Its function is as follows. Catalyzes the transfer of a farnesyl moiety from farnesyl diphosphate to a cysteine at the fourth position from the C-terminus of several proteins. The beta subunit FTB is responsible for peptide-binding. The chain is Protein farnesyltransferase subunit beta (FTB) from Pisum sativum (Garden pea).